Consider the following 656-residue polypeptide: Membrane-associated tyrosine- and threonine-specific cdc2-inhibitory kinase wee-1.3 (656 aa).

A compositionally biased stretch (polar residues) spans 1–11; that stretch reads MDETENNTSID. The tract at residues 1–24 is disordered; the sequence is MDETENNTSIDSVEVGPSSPRVVA. Residues 107 to 354 enclose the Protein kinase domain; sequence FQIDEIIGRG…SDALRKHLSI (248 aa). Residues 113–121 and lysine 136 contribute to the ATP site; that span reads IGRGSFGEV. The active-site Proton acceptor is the aspartate 227. Mg(2+)-binding residues include asparagine 232 and aspartate 245. Disordered regions lie at residues 449 to 552 and 617 to 656; these read PFDF…NSSI and KGKE…GDEN. Residues 486 to 505 show a composition bias toward polar residues; it reads ATCSSSNSSAIETAEDSLSS. The segment covering 617–631 has biased composition (basic and acidic residues); that stretch reads KGKEKPVVEPAELRQ. Residues 646–656 show a composition bias toward polar residues; sequence ASFQGSSGDEN.

The protein belongs to the protein kinase superfamily. Ser/Thr protein kinase family. WEE1 subfamily.

The protein resides in the golgi apparatus membrane. The protein localises to the cytoplasm. The enzyme catalyses L-seryl-[protein] + ATP = O-phospho-L-seryl-[protein] + ADP + H(+). The catalysed reaction is L-threonyl-[protein] + ATP = O-phospho-L-threonyl-[protein] + ADP + H(+). Its function is as follows. Acts as a negative regulator of entry into mitosis (G2 to M transition) by phosphorylation of the CDK1 kinase during oocyte maturation. Required for embryonic development, germline proliferation and initiation of meiosis during spermatogenesis. Required for chromosome structure during mitosis and negative regulation of nuclear envelope breakdown. This chain is Membrane-associated tyrosine- and threonine-specific cdc2-inhibitory kinase wee-1.3, found in Caenorhabditis briggsae.